The sequence spans 113 residues: Prefoldin subunit beta (113 aa).

This sequence belongs to the prefoldin subunit beta family. In terms of assembly, heterohexamer of two alpha and four beta subunits.

The protein resides in the cytoplasm. Molecular chaperone capable of stabilizing a range of proteins. Seems to fulfill an ATP-independent, HSP70-like function in archaeal de novo protein folding. This chain is Prefoldin subunit beta (pfdB), found in Methanocaldococcus jannaschii (strain ATCC 43067 / DSM 2661 / JAL-1 / JCM 10045 / NBRC 100440) (Methanococcus jannaschii).